A 308-amino-acid chain; its full sequence is Mitochondrial import receptor subunit TOM40B (308 aa).

A required for mitochondrial targeting region spans residues 281–308 (PLPVTLALGAFLNHWRNRFHCGFSITVG).

It belongs to the Tom40 family. As to quaternary structure, forms part of the preprotein translocase of the outer mitochondrial membrane (TOM complex) containing TOMM22, TOMM40, TOMM40L and TOMM70. Interacts with mitochondrial targeting sequences. Widely expressed. Higher levels in heart, brain and liver, very low level in testis.

Its subcellular location is the mitochondrion outer membrane. Functionally, potential channel-forming protein implicated in import of protein precursors into mitochondria. This Rattus norvegicus (Rat) protein is Mitochondrial import receptor subunit TOM40B.